Consider the following 388-residue polypeptide: L-lactate dehydrogenase (388 aa).

One can recognise an FMN hydroxy acid dehydrogenase domain in the interval 1–380 (MIISAASDYR…SADALSRVTR (380 aa)). Residue tyrosine 24 coordinates substrate. FMN is bound by residues serine 106 and glutamine 127. Tyrosine 129 contributes to the substrate binding site. Threonine 155 contacts FMN. Arginine 164 contacts substrate. Residue lysine 251 participates in FMN binding. The Proton acceptor role is filled by histidine 275. Residue arginine 278 coordinates substrate. Residue 306–330 (DSGIRSGLDVVRMLALGADAVLLGR) participates in FMN binding.

The protein belongs to the FMN-dependent alpha-hydroxy acid dehydrogenase family. The cofactor is FMN.

The protein localises to the cell inner membrane. It catalyses the reaction (S)-lactate + A = pyruvate + AH2. Catalyzes the conversion of L-lactate to pyruvate. Is coupled to the respiratory chain. In Xanthomonas axonopodis pv. citri (strain 306), this protein is L-lactate dehydrogenase.